Here is an 86-residue protein sequence, read N- to C-terminus: Small ribosomal subunit protein bS16 (86 aa).

This sequence belongs to the bacterial ribosomal protein bS16 family.

The chain is Small ribosomal subunit protein bS16 from Xylella fastidiosa (strain 9a5c).